A 396-amino-acid chain; its full sequence is Flavohemoprotein (396 aa).

The region spanning 1 to 136 (MLDAQTIATV…LANVFINREA (136 aa)) is the Globin domain. H85 is a heme b binding site. Active-site charge relay system residues include Y95 and E135. Residues 147 to 396 (GGWEGTRDFR…YECFGPHKVL (250 aa)) are reductase. Residues 150–255 (EGTRDFRIVA…VAPAGDFFMA (106 aa)) form the FAD-binding FR-type domain. Residues Y188 and 204–207 (RQYS) contribute to the FAD site. Residue 268–273 (GVGQTP) participates in NADP(+) binding. Position 389-392 (389-392 (CFGP)) interacts with FAD.

This sequence belongs to the globin family. Two-domain flavohemoproteins subfamily. In the C-terminal section; belongs to the flavoprotein pyridine nucleotide cytochrome reductase family. Heme b serves as cofactor. FAD is required as a cofactor.

It carries out the reaction 2 nitric oxide + NADPH + 2 O2 = 2 nitrate + NADP(+) + H(+). The catalysed reaction is 2 nitric oxide + NADH + 2 O2 = 2 nitrate + NAD(+) + H(+). Is involved in NO detoxification in an aerobic process, termed nitric oxide dioxygenase (NOD) reaction that utilizes O(2) and NAD(P)H to convert NO to nitrate, which protects the bacterium from various noxious nitrogen compounds. Therefore, plays a central role in the inducible response to nitrosative stress. The chain is Flavohemoprotein from Escherichia coli O6:H1 (strain CFT073 / ATCC 700928 / UPEC).